Consider the following 339-residue polypeptide: Uroporphyrinogen decarboxylase (339 aa).

Substrate-binding positions include 21–25 (RQAGR), F40, D71, Y147, S202, and H315.

The protein belongs to the uroporphyrinogen decarboxylase family. Homodimer.

Its subcellular location is the cytoplasm. The enzyme catalyses uroporphyrinogen III + 4 H(+) = coproporphyrinogen III + 4 CO2. Its pathway is porphyrin-containing compound metabolism; protoporphyrin-IX biosynthesis; coproporphyrinogen-III from 5-aminolevulinate: step 4/4. In terms of biological role, catalyzes the decarboxylation of four acetate groups of uroporphyrinogen-III to yield coproporphyrinogen-III. In Helicobacter pylori (strain J99 / ATCC 700824) (Campylobacter pylori J99), this protein is Uroporphyrinogen decarboxylase.